We begin with the raw amino-acid sequence, 338 residues long: Protein FosB (338 aa).

Disordered stretches follow at residues 1–54 (MFQA…PGSF) and 80–179 (AQSQ…RREL). Composition is skewed to polar residues over residues 13-31 (SRCS…SVDS) and 102-112 (TSYSTPGLSAY). The residue at position 27 (S27) is a Phosphoserine. The span at 123 to 137 (PSTSTTTSGPVSARP) shows a compositional bias: low complexity. The 64-residue stretch at 155–218 (EEKRRVRRER…ERLEFVLVAH (64 aa)) folds into the bZIP domain. Residues 157–182 (KRRVRRERNKLAAAKCRNRRRELTDR) form a basic motif region. Positions 183-211 (LQAETDQLEEEKAELESEIAELQKEKERL) are leucine-zipper. Disordered stretches follow at residues 222–276 (CKIP…PPNL) and 316–338 (GAQR…LLAL). Residues 256 to 265 (LPPPPPPPLP) are compositionally biased toward pro residues. Composition is skewed to polar residues over residues 266 to 276 (FQSSRDAPPNL) and 318 to 338 (QRTS…LLAL).

Belongs to the bZIP family. Fos subfamily. Heterodimer; binds to DNA as heterodimer. Component of an AP-1 transcription factor complex; composed of FOS-JUN heterodimers. As part of the AP-1 transcription factor complex, forms heterodimers with JUN, JUNB or JUND, thereby binding to the AP-1 consensus sequence and stimulating transcription. Interacts with the BAF multiprotein chromatin-remodeling complex subunits SMARCB1 and SMARCD1. Interacts with ARID1A and JUN. In terms of assembly, homodimer under oxidizing conditions and monomer under reducing conditions (in vitro). Heterodimer; binds to DNA as heterodimer. Forms heterodimers with JUNB, JUN or JUND; thereby binding to the AP-1 consensus sequence but does not stimulate transcription. Forms heterodimers with JUND under oxidizing conditions. In terms of processing, phosphorylated. Phosphorylated at Ser-27 by CSNK2A1; phosphorylation increases protein stability and transactivation potential. As to expression, expressed in brain, including the preoptic area of the hypothalamus, the main and accessory olfactory bulbs, the pyriform cortex and the hippocampus (at protein level). Expressed in the neurons of the subgranular zone of the dentate gyrus in the hippocampus (at protein level). Expressed in pyramidal cells in CA1 and CA3, in the dentate gyrus and the nucleus accumbens of the striatum (at protein level). In terms of tissue distribution, expressed in the core and shell of the nucleus accumbens of the striatum (at protein level). Expressed in the neurons of the subgranular zone of the dentate gyrus in the hippocampus (at protein level).

The protein localises to the nucleus. In terms of biological role, heterodimerizes with proteins of the JUN family to form an AP-1 transcription factor complex, thereby enhancing their DNA binding activity to gene promoters containing an AP-1 consensus sequence 5'-TGA[GC]TCA-3' and enhancing their transcriptional activity. As part of the AP-1 complex, facilitates enhancer selection together with cell-type-specific transcription factors by collaboratively binding to nucleosomal enhancers and recruiting the SWI/SNF (BAF) chromatin remodeling complex to establish accessible chromatin. Together with JUN, plays a role in activation-induced cell death of T cells by binding to the AP-1 promoter site of FASLG/CD95L, and inducing its transcription in response to activation of the TCR/CD3 signaling pathway. Exhibits transactivation activity in vitro. Involved in the display of nurturing behavior towards newborns. May play a role in neurogenesis in the hippocampus and in learning and memory-related tasks by regulating the expression of various genes involved in neurogenesis, depression and epilepsy. Implicated in behavioral responses related to morphine reward and spatial memory. Its function is as follows. Exhibits lower transactivation activity than isoform 1 in vitro. The heterodimer with JUN does not display any transcriptional activity, and may thereby act as an transcriptional inhibitor. May be involved in the regulation of neurogenesis in the hippocampus. May play a role in synaptic modifications in nucleus accumbens medium spiny neurons and thereby play a role in adaptive and pathological reward-dependent learning, including maladaptive responses involved in drug addiction. Seems to be more stably expressed with a half-life of ~9.5 hours in cell culture as compared to 1.5 hours half-life of isoform 1. The chain is Protein FosB from Mus musculus (Mouse).